Reading from the N-terminus, the 249-residue chain is 5'-nucleotidase SurE (249 aa).

A divalent metal cation is bound by residues Asp-8, Asp-9, Ser-39, and Asn-91.

The protein belongs to the SurE nucleotidase family. Requires a divalent metal cation as cofactor.

It is found in the cytoplasm. The catalysed reaction is a ribonucleoside 5'-phosphate + H2O = a ribonucleoside + phosphate. In terms of biological role, nucleotidase that shows phosphatase activity on nucleoside 5'-monophosphates. The protein is 5'-nucleotidase SurE of Stutzerimonas stutzeri (strain A1501) (Pseudomonas stutzeri).